The chain runs to 86 residues: Large ribosomal subunit protein bL27 (86 aa).

Positions M1–G22 are disordered.

The protein belongs to the bacterial ribosomal protein bL27 family.

The polypeptide is Large ribosomal subunit protein bL27 (Vibrio cholerae serotype O1 (strain ATCC 39315 / El Tor Inaba N16961)).